The chain runs to 405 residues: Argininosuccinate synthase (405 aa).

ATP-binding positions include 10 to 18 (AYSGGLDTS) and Ala-37. Positions 88 and 93 each coordinate L-citrulline. Residue Gly-118 participates in ATP binding. Residues Thr-120, Asn-124, and Asp-125 each contribute to the L-aspartate site. Residue Asn-124 coordinates L-citrulline. L-citrulline contacts are provided by Arg-128, Ser-179, Ser-188, Glu-264, and Tyr-276.

The protein belongs to the argininosuccinate synthase family. Type 1 subfamily. As to quaternary structure, homotetramer.

The protein resides in the cytoplasm. The catalysed reaction is L-citrulline + L-aspartate + ATP = 2-(N(omega)-L-arginino)succinate + AMP + diphosphate + H(+). The protein operates within amino-acid biosynthesis; L-arginine biosynthesis; L-arginine from L-ornithine and carbamoyl phosphate: step 2/3. The chain is Argininosuccinate synthase from Pseudomonas syringae pv. tomato (strain ATCC BAA-871 / DC3000).